Reading from the N-terminus, the 475-residue chain is E3 ubiquitin-protein ligase TRIM62 (475 aa).

The segment at 11–54 (CSICLSIYQDPVSLGCEHYFCRRCITEHWVRQEAQGARDCPECR) adopts an RING-type zinc-finger fold. Residues 88–128 (RAARPCQAHDKVKLFCLTDRALLCFFCDEPALHEQHQVTGI) form a B box-type zinc finger. Positions 93, 96, 114, and 120 each coordinate Zn(2+). Positions 121–241 (EQHQVTGIDD…LQERLAETDR (121 aa)) form a coiled coil. The B30.2/SPRY domain occupies 277-475 (PLQYTIWKSL…QPLRINTVRI (199 aa)).

The protein belongs to the TRIM/RBCC family. In terms of assembly, interacts with the ubiquitin-conjugating enzyme, UBE2D2. Polyubiquitinated, autoubiquitinated in the presence of UBE2D2.

It localises to the cytoplasm. The enzyme catalyses S-ubiquitinyl-[E2 ubiquitin-conjugating enzyme]-L-cysteine + [acceptor protein]-L-lysine = [E2 ubiquitin-conjugating enzyme]-L-cysteine + N(6)-ubiquitinyl-[acceptor protein]-L-lysine.. Its pathway is protein modification; protein ubiquitination. E3 ubiquitin ligase that plays a role in antifungal immunity by mediating 'Lys-27'-linked ubiquitination of CARD9 downstream of C-type lectin receptors; leading to CARD9 activation, followed by activation of NF-kappa-B and MAP kinase p38 pathways. E3 ubiquitin ligase activity is dependent on E2 ubiquitin-conjugating enzyme UBE2D2. The sequence is that of E3 ubiquitin-protein ligase TRIM62 from Mus musculus (Mouse).